Consider the following 399-residue polypeptide: Alpha-ketoglutarate-dependent dioxygenase fc-dox (399 aa).

Fe cation is bound by residues His-158 and Asp-160. Residue Thr-203 participates in 2-oxoglutarate binding. His-355 lines the Fe cation pocket. Arg-367 lines the 2-oxoglutarate pocket. The tract at residues 371–399 (QGWLAGDRPPKGPVPIPDPRARSSIYYQK) is disordered.

The protein belongs to the TfdA dioxygenase family. The cofactor is Fe(2+).

The protein operates within mycotoxin biosynthesis. Alpha-ketoglutarate-dependent dioxygenase; part of the 2 gene clusters that mediate the biosynthesis of fusicoccins, diterpene glucosides that display phytohormone-like activity and function as potent activators of plasma membrane H(+)-ATPases in plants by modifying 14-3-3 proteins and cause the plant disease constriction canker. The first step in the pathway is performed by the fusicoccadiene synthase PaFS that possesses both prenyl transferase and terpene cyclase activity, converting isopentenyl diphosphate and dimethylallyl diphosphate into geranylgeranyl diphosphate (GGDP) and successively converting GGDP into fusicocca-2,10(14)-diene, a precursor for fusicoccin H. The second step is the oxidation at the C-8 position by the cytochrome P450 monooxygenase PaP450-2 to yield fusicocca-2,10(14)-diene-8-beta-ol. The cytochrome P450 monooxygenase PaP450-1 then catalyzes the hydroxylation at the C-16 position to produce fusicocca-2,10(14)-diene-8-beta,16-diol. The dioxygenase fc-dox then catalyzes the 16-oxydation of fusicocca-2,10(14)-diene-8-beta,16-diol to yield an aldehyde (8-beta-hydroxyfusicocca-1,10(14)-dien-16-al). The short-chain dehydrogenase/reductase fc-sdr catalyzes the reduction of the aldehyde to yield fusicocca-1,10(14)-diene-8-beta,16-diol. The next step is the hydroxylation at C-9 performed by the cytochrome P450 monooxygenase PaP450-3 that leads to fusicoccin H aglycon which is glycosylated to fusicoccin H by the O-glycosyltransferase PaGT. Hydroxylation at C-12 by the cytochrome P450 monooxygenase PaP450-4 leads then to the production of fusicoccin Q and is followed by methylation by the O-methyltransferase PaMT to yield fusicoccin P. Fusicoccin P is further converted to fusicoccin J via prenylation by the O-glucose prenyltransferase PaPT. Cytochrome P450 monooxygenase PaP450-5 then performs hydroxylation at C-19 to yield dideacetyl-fusicoccin A which is acetylated to 3'-O-deacetyl-fusicoccin A by the O-acetyltransferase PaAT-2. Finally, a another acetylation by the O-acetyltransferase PaAT-1 yields fusicoccin A. The sequence is that of Alpha-ketoglutarate-dependent dioxygenase fc-dox from Phomopsis amygdali (Fusicoccum amygdali).